The chain runs to 156 residues: S-ribosylhomocysteine lyase (156 aa).

The Fe cation site is built by His56, His60, and Cys123.

The protein belongs to the LuxS family. Homodimer. Requires Fe cation as cofactor.

It catalyses the reaction S-(5-deoxy-D-ribos-5-yl)-L-homocysteine = (S)-4,5-dihydroxypentane-2,3-dione + L-homocysteine. Functionally, involved in the synthesis of autoinducer 2 (AI-2) which is secreted by bacteria and is used to communicate both the cell density and the metabolic potential of the environment. The regulation of gene expression in response to changes in cell density is called quorum sensing. Catalyzes the transformation of S-ribosylhomocysteine (RHC) to homocysteine (HC) and 4,5-dihydroxy-2,3-pentadione (DPD). The protein is S-ribosylhomocysteine lyase of Staphylococcus aureus (strain Mu3 / ATCC 700698).